We begin with the raw amino-acid sequence, 496 residues long: Cytochrome P450 monooxygenase ausR (496 aa).

The helical transmembrane segment at 12-32 (IGLYILWTIPVLFVIFKLLAP) threads the bilayer. Residue Cys-435 participates in heme binding.

It belongs to the cytochrome P450 family. The cofactor is heme.

The protein resides in the membrane. Its pathway is secondary metabolite biosynthesis; terpenoid biosynthesis. Its function is as follows. Cytochrome P450 monooxygenase; part of the gene cluster B that mediates the biosynthesis of the fungal meroterpenoid acetoxydehydroaustin. The first step of the pathway is the synthesis of 3,5-dimethylorsellinic acid by the polyketide synthase ausA. 3,5-dimethylorsellinic acid is then prenylated by the polyprenyl transferase ausN. Further epoxidation by the FAD-dependent monooxygenase ausM and cyclization by the probable terpene cyclase ausL lead to the formation of protoaustinoid A. Protoaustinoid A is then oxidized to spiro-lactone preaustinoid A3 by the combined action of the FAD-binding monooxygenases ausB and ausC, and the dioxygenase ausE. Acid-catalyzed keto-rearrangement and ring contraction of the tetraketide portion of preaustinoid A3 by ausJ lead to the formation of preaustinoid A4. The aldo-keto reductase ausK, with the help of ausH, is involved in the next step by transforming preaustinoid A4 into isoaustinone which is in turn hydroxylated by the P450 monooxygenase ausI to form austinolide. The cytochrome P450 monooxygenase ausG then modifies austinolide to austinol. Austinol is further acetylated to austin by the O-acetyltransferase ausP, which spontaneously changes to dehydroaustin. The cytochrome P450 monooxygenase then converts dehydroaustin is into 7-dehydrodehydroaustin. The hydroxylation catalyzed by ausR permits the second O-acetyltransferase ausQ to add an additional acetyl group to the molecule, leading to the formation of acetoxydehydroaustin. Due to genetic rearrangements of the clusters and the subsequent loss of some enzymes, the end product of the Penicillium brasilianum austinoid biosynthesis clusters is acetoxydehydroaustin. This Penicillium brasilianum protein is Cytochrome P450 monooxygenase ausR.